Here is an 88-residue protein sequence, read N- to C-terminus: Small ribosomal subunit protein bS20 (88 aa).

Residues 1–23 are compositionally biased toward basic and acidic residues; that stretch reads MPNTKSAEKALRVADANRQENRR. Disordered regions lie at residues 1–28 and 69–88; these read MPNTKSAEKALRVADANRQENRRAKSQV and PKNAARRKSRLMKKLNQAAK. The span at 71 to 81 shows a compositional bias: basic residues; it reads NAARRKSRLMK.

It belongs to the bacterial ribosomal protein bS20 family.

In terms of biological role, binds directly to 16S ribosomal RNA. The chain is Small ribosomal subunit protein bS20 from Dehalococcoides mccartyi (strain ATCC BAA-2266 / KCTC 15142 / 195) (Dehalococcoides ethenogenes (strain 195)).